A 25-amino-acid polypeptide reads, in one-letter code: MADAAVHGHGDHHDTRGFFTRWFMS.

It belongs to the heme-copper respiratory oxidase family. Cu(2+) is required as a cofactor. It depends on heme as a cofactor.

The protein resides in the cell inner membrane. The enzyme catalyses 4 Fe(II)-[cytochrome c] + O2 + 8 H(+)(in) = 4 Fe(III)-[cytochrome c] + 2 H2O + 4 H(+)(out). It functions in the pathway energy metabolism; oxidative phosphorylation. Its function is as follows. Subunit I and II form the functional core of the enzyme complex. Electrons originating in cytochrome c are transferred via heme a and Cu(A) to the binuclear center formed by heme a3 and Cu(B). This cytochrome c oxidase shows proton pump activity across the membrane in addition to the electron transfer. This chain is Cytochrome c oxidase subunit 1 (ctaD), found in Paracoccus versutus (Thiobacillus versutus).